We begin with the raw amino-acid sequence, 597 residues long: Ribosomal oxygenase 1 (597 aa).

The residue at position 1 (Met-1) is an N-acetylmethionine. The interval 1 to 138 is disordered; sequence MDELPNGNGA…HVDDPERPWD (138 aa). Composition is skewed to basic residues over residues 14–24 and 37–48; these read KRGRGRRRRQP and RPRKVRRHRKSA. Low complexity predominate over residues 49–62; that stretch reads ASRVAALRARALLS. Residues Ser-62 and Ser-65 each carry the phosphoserine modification. A compositionally biased stretch (basic and acidic residues) spans 72–81; the sequence is VRGKRERPAE. At Ser-86 the chain carries Phosphoserine. A JmjC domain is found at 250 to 395; it reads CSLRLLCPQA…DFLEAVLPLA (146 aa). Positions 296, 298, and 361 each coordinate Fe cation.

Belongs to the ROX family. NO66 subfamily. Interacts with SP7/OSX; the interaction is direct. Interacts with MYC. Interacts with PHF19; leading to its recruitment to H3K36me3 sites. Fe(2+) serves as cofactor.

The protein resides in the nucleus. It is found in the nucleolus. It localises to the nucleoplasm. It carries out the reaction N(6),N(6)-dimethyl-L-lysyl(36)-[histone H3] + 2 2-oxoglutarate + 2 O2 = L-lysyl(36)-[histone H3] + 2 formaldehyde + 2 succinate + 2 CO2. It catalyses the reaction N(6)-methyl-L-lysyl-[protein] + 2-oxoglutarate + O2 = L-lysyl-[protein] + formaldehyde + succinate + CO2. The catalysed reaction is L-histidyl-[protein] + 2-oxoglutarate + O2 = (3S)-3-hydroxy-L-histidyl-[protein] + succinate + CO2. Functionally, oxygenase that can act as both a histone lysine demethylase and a ribosomal histidine hydroxylase. Specifically demethylates 'Lys-4' (H3K4me) and 'Lys-36' (H3K36me) of histone H3, thereby playing a central role in histone code. Preferentially demethylates trimethylated H3 'Lys-4' (H3K4me3) and monomethylated H3 'Lys-4' (H3K4me1) residues, while it has weaker activity for dimethylated H3 'Lys-36' (H3K36me2). Acts as a regulator of osteoblast differentiation via its interaction with SP7/OSX by demethylating H3K4me and H3K36me, thereby inhibiting SP7/OSX-mediated promoter activation. Also catalyzes demethylation of non-histone proteins, such as CGAS: demethylation of monomethylated CGAS promotes interaction between CGAS and PARP1, followed by PARP1 inactivation. Also catalyzes the hydroxylation of 60S ribosomal protein L8 on 'His-216', thereby playing a role in ribosome biogenesis. Participates in MYC-induced transcriptional activation. This chain is Ribosomal oxygenase 1, found in Rattus norvegicus (Rat).